The chain runs to 487 residues: Zinc finger and BTB domain-containing protein 32 (487 aa).

In terms of domain architecture, BTB spans 29–87 (CDTLITVGSQEFPAHSLVLAGVSQQLGRRGQWALGEGISPSTFAQLLNFVYGESVELQP). Residues 112-166 (ARGDRAKKPDPGLKKHQEEPEKPSRNPERELGDPGEKQKPEQVSRTGGREQEMLH) are compositionally biased toward basic and acidic residues. Disordered regions lie at residues 112–244 (ARGD…TSVT) and 308–371 (QNQL…ARSR). Residues 308 to 320 (QNQLASSSPTPGS) show a composition bias toward polar residues. Positions 357–369 (PPRPHPPPAPPAR) are enriched in pro residues. 3 consecutive C2H2-type zinc fingers follow at residues 373 to 395 (YACS…YRVH), 401 to 423 (FSCS…LRTH), and 428 to 450 (YRCS…MRGH). Residues 468-487 (SSSRPSRPSTSPCCPSSSTT) are disordered.

The protein belongs to the krueppel C2H2-type zinc-finger protein family. As to quaternary structure, homodimer (via PTB domain). Interacts with the N-terminal of FANCC. Interacts with ZBTB16. Interacts with GATA3. In terms of tissue distribution, predominantly expressed in testis. Some isoforms are ubiquitously expressed.

It localises to the nucleus. In terms of biological role, DNA-binding protein that binds to the to a 5'-TGTACAGTGT-3' core sequence. May function as a transcriptional transactivator and transcriptional repressor. Probably exerts its repressor effect by preventing GATA3 from binding to DNA. May play a role in regulating the differentiation and activation of helper T-cells. In Homo sapiens (Human), this protein is Zinc finger and BTB domain-containing protein 32 (ZBTB32).